The chain runs to 428 residues: 4-hydroxy-3-methylbut-2-en-1-yl diphosphate synthase (flavodoxin) (428 aa).

[4Fe-4S] cluster-binding residues include C300, C303, C346, and E353.

The protein belongs to the IspG family. It depends on [4Fe-4S] cluster as a cofactor.

The catalysed reaction is (2E)-4-hydroxy-3-methylbut-2-enyl diphosphate + oxidized [flavodoxin] + H2O + 2 H(+) = 2-C-methyl-D-erythritol 2,4-cyclic diphosphate + reduced [flavodoxin]. It participates in isoprenoid biosynthesis; isopentenyl diphosphate biosynthesis via DXP pathway; isopentenyl diphosphate from 1-deoxy-D-xylulose 5-phosphate: step 5/6. Its function is as follows. Converts 2C-methyl-D-erythritol 2,4-cyclodiphosphate (ME-2,4cPP) into 1-hydroxy-2-methyl-2-(E)-butenyl 4-diphosphate. The protein is 4-hydroxy-3-methylbut-2-en-1-yl diphosphate synthase (flavodoxin) of Methylobacillus flagellatus (strain ATCC 51484 / DSM 6875 / VKM B-1610 / KT).